The sequence spans 375 residues: RNA exonuclease 4 (375 aa).

The segment at 21–78 is disordered; that stretch reads KTLGSDASSSSASSSTNNRRKLSTSESTKPKRTRLDAKEKDAEGSKSCSPAPTSLPWF. The segment covering 25–35 has biased composition (low complexity); sequence SDASSSSASSS. Residues 53-64 show a composition bias toward basic and acidic residues; sequence TRLDAKEKDAEG. The Exonuclease domain occupies 134–297; sequence NYLAIDCEMV…FRSQKPKWDE (164 aa).

Belongs to the REXO4 family.

The protein localises to the nucleus. Its function is as follows. Exoribonuclease involved in ribosome biosynthesis. Involved in the processing of ITS1, the internal transcribed spacer localized between the 18S and 5.8S rRNAs. In Mycosarcoma maydis (Corn smut fungus), this protein is RNA exonuclease 4 (REX4).